The following is a 511-amino-acid chain: Maturase K (511 aa).

It belongs to the intron maturase 2 family. MatK subfamily.

The protein localises to the plastid. The protein resides in the chloroplast. Functionally, usually encoded in the trnK tRNA gene intron. Probably assists in splicing its own and other chloroplast group II introns. This Hordeum bulbosum (Bulbous barley) protein is Maturase K.